Reading from the N-terminus, the 420-residue chain is Dynein axonemal assembly factor 4 (420 aa).

The 85-residue stretch at 3-87 (LQVSDYSWQQ…KEAAMWETLS (85 aa)) folds into the CS domain. The interval 7 to 103 (DYSWQQTKTA…ETMQRIREKS (97 aa)) is mediates interaction with ESR1 and STUB1. TPR repeat units follow at residues 290–323 (PEWL…NNKM), 324–357 (PLLY…LMPP), and 366–399 (MKAH…DPSN).

In terms of assembly, interacts with ZMYND10. Interacts with STUB1. Interacts with ESR1 and ESR2. Interacts with DNAAF2. Interacts with CCT3, CCT4, CCT5 and CCT8. Interacts with DNAAF6/PIH1D3.

The protein resides in the nucleus. The protein localises to the cytoplasm. Its subcellular location is the cell projection. It localises to the neuron projection. It is found in the dynein axonemal particle. Functionally, involved in neuronal migration during development of the cerebral neocortex. May regulate the stability and proteasomal degradation of the estrogen receptors that play an important role in neuronal differentiation, survival and plasticity. Axonemal dynein assembly factor required for ciliary motility. The protein is Dynein axonemal assembly factor 4 of Pongo pygmaeus (Bornean orangutan).